A 77-amino-acid polypeptide reads, in one-letter code: MSWYEKYNIVLNPPKRCSSTCSDNLTTILSEDGTNIIRAILYSQPKKLKILQDFLTTSRNKMFLYKILDDEIRRVLT.

It belongs to the orthopoxvirus OPG128 family. In terms of assembly, interacts with sulfhydryl oxidase OPG072; this interaction involves formation of a transient disulfide-bonded intermediate, allowing disulfide bond transfer. Interacts with OPG088; this interaction involves formation of a transient disulfide-bonded intermediate, allowing disulfide bond transfer.

Late protein which probably participates in disulfide bond formation by functioning as a thiol-disulfide transfer protein between membrane-associated OPG072 and OPG08. The complete pathway for formation of disulfide bonds in intracellular virion membrane proteins sequentially involves oxidation of OPG072, OPG128 and OPG08. This Monkeypox virus protein is Protein OPG128 (OPG128).